The primary structure comprises 54 residues: UPF0181 protein APJL_0874 (54 aa).

This sequence belongs to the UPF0181 family.

The polypeptide is UPF0181 protein APJL_0874 (Actinobacillus pleuropneumoniae serotype 3 (strain JL03)).